A 286-amino-acid chain; its full sequence is Beta-lactamase SHV-29 (286 aa).

The signal sequence occupies residues 1-21 (MRYIRLCIISLLATLPLAVHA). Ser66 acts as the Acyl-ester intermediate in catalysis. Cys73 and Cys119 are joined by a disulfide. Glu164 (proton acceptor) is an active-site residue. Residue 230–232 (KTG) coordinates substrate.

This sequence belongs to the class-A beta-lactamase family.

The catalysed reaction is a beta-lactam + H2O = a substituted beta-amino acid. The sequence is that of Beta-lactamase SHV-29 (bla) from Klebsiella pneumoniae.